The primary structure comprises 196 residues: Inosine triphosphate pyrophosphatase 1 (196 aa).

Position 20–25 (20–25 (TGNDGK)) interacts with ITP. Position 48 (Glu48) interacts with Mg(2+). ITP contacts are provided by residues Lys61, 77 to 78 (DT), Lys94, 153 to 156 (FGWD), Lys177, and 182 to 183 (PR).

It belongs to the HAM1 NTPase family. As to quaternary structure, homodimer. The cofactor is Mg(2+). Mn(2+) is required as a cofactor.

The protein localises to the cytoplasm. It catalyses the reaction ITP + H2O = IMP + diphosphate + H(+). The catalysed reaction is dITP + H2O = dIMP + diphosphate + H(+). It carries out the reaction XTP + H2O = XMP + diphosphate + H(+). Pyrophosphatase that hydrolyzes non-canonical purine nucleotides such as inosine triphosphate (ITP), deoxyinosine triphosphate (dITP) or xanthosine 5'-triphosphate (XTP) to their respective monophosphate derivatives. The enzyme does not distinguish between the deoxy- and ribose forms. Probably excludes non-canonical purines from RNA and DNA precursor pools, thus preventing their incorporation into RNA and DNA and avoiding chromosomal lesions. The chain is Inosine triphosphate pyrophosphatase 1 from Trypanosoma cruzi (strain CL Brener).